A 533-amino-acid polypeptide reads, in one-letter code: (E)-beta-farnesene synthase (533 aa).

Aspartate 286, aspartate 290, asparagine 430, serine 434, and glutamate 438 together coordinate Mg(2+). The DDXXD motif motif lies at 286 to 290; sequence DDMMD.

The protein belongs to the terpene synthase family. The cofactor is Mg(2+). It depends on Co(2+) as a cofactor. Requires Mn(2+) as cofactor.

The protein localises to the cytoplasm. The enzyme catalyses (2E,6E)-farnesyl diphosphate = (E)-beta-farnesene + diphosphate. The protein operates within secondary metabolite biosynthesis; terpenoid biosynthesis. Its function is as follows. Sesquiterpene cyclase catalyzing the production of sixfold more beta-farnesene than alpha-bergamotene from farnesyl diphosphate. Involved in indirect defense by producing volatile signals attracting natural enemies of herbivores. The chain is (E)-beta-farnesene synthase from Zea diploperennis (Diploperennial teosinte).